The primary structure comprises 370 residues: Lipoyl synthase, mitochondrial (370 aa).

The [4Fe-4S] cluster site is built by Cys104, Cys109, Cys115, Cys135, Cys139, Cys142, and Ser350. Positions 118-339 (GGDKSKATAT…KQKALELGFL (222 aa)) constitute a Radical SAM core domain.

The protein belongs to the radical SAM superfamily. Lipoyl synthase family. [4Fe-4S] cluster serves as cofactor.

It is found in the mitochondrion. It carries out the reaction [[Fe-S] cluster scaffold protein carrying a second [4Fe-4S](2+) cluster] + N(6)-octanoyl-L-lysyl-[protein] + 2 oxidized [2Fe-2S]-[ferredoxin] + 2 S-adenosyl-L-methionine + 4 H(+) = [[Fe-S] cluster scaffold protein] + N(6)-[(R)-dihydrolipoyl]-L-lysyl-[protein] + 4 Fe(3+) + 2 hydrogen sulfide + 2 5'-deoxyadenosine + 2 L-methionine + 2 reduced [2Fe-2S]-[ferredoxin]. It functions in the pathway protein modification; protein lipoylation via endogenous pathway; protein N(6)-(lipoyl)lysine from octanoyl-[acyl-carrier-protein]: step 2/2. Catalyzes the radical-mediated insertion of two sulfur atoms into the C-6 and C-8 positions of the octanoyl moiety bound to the lipoyl domains of lipoate-dependent enzymes, thereby converting the octanoylated domains into lipoylated derivatives. The protein is Lipoyl synthase, mitochondrial of Kluyveromyces lactis (strain ATCC 8585 / CBS 2359 / DSM 70799 / NBRC 1267 / NRRL Y-1140 / WM37) (Yeast).